The chain runs to 230 residues: Demethylmenaquinone methyltransferase (230 aa).

Residues Thr-62, Asp-80, 100–101, and Ser-117 each bind S-adenosyl-L-methionine; that span reads DG.

Belongs to the class I-like SAM-binding methyltransferase superfamily. MenG/UbiE family.

The enzyme catalyses a 2-demethylmenaquinol + S-adenosyl-L-methionine = a menaquinol + S-adenosyl-L-homocysteine + H(+). It functions in the pathway quinol/quinone metabolism; menaquinone biosynthesis; menaquinol from 1,4-dihydroxy-2-naphthoate: step 2/2. Its function is as follows. Methyltransferase required for the conversion of demethylmenaquinol (DMKH2) to menaquinol (MKH2). The chain is Demethylmenaquinone methyltransferase from Corynebacterium glutamicum (strain R).